Reading from the N-terminus, the 521-residue chain is Probable cysteine protease ATG4 (521 aa).

The Nucleophile role is filled by Cys-177. Active-site residues include Asp-352 and His-354.

It belongs to the peptidase C54 family.

It is found in the cytoplasm. It localises to the nucleus. The protein localises to the preautophagosomal structure. The catalysed reaction is [protein]-C-terminal L-amino acid-glycyl-phosphatidylethanolamide + H2O = [protein]-C-terminal L-amino acid-glycine + a 1,2-diacyl-sn-glycero-3-phosphoethanolamine. In terms of biological role, cysteine protease that plays a key role in cytoplasm to vacuole transport (Cvt) and autophagy by mediating both proteolytic activation and delipidation of ATG8. Required for selective autophagic degradation of the nucleus (nucleophagy) as well as for mitophagy which contributes to regulate mitochondrial quantity and quality by eliminating the mitochondria to a basal level to fulfill cellular energy requirements and preventing excess ROS production. The protease activity is required for proteolytic activation of ATG8: cleaves the C-terminal amino acid of ATG8 to reveal a C-terminal glycine. ATG8 ubiquitin-like activity requires the exposure of the glycine at the C-terminus for its conjugation to phosphatidylethanolamine (PE) and its insertion to membranes, which is necessary for autophagy. The ATG8-PE conjugate mediates tethering between adjacent membranes and stimulates membrane hemifusion, leading to expansion of the autophagosomal membrane during autophagy. In addition to the protease activity, also catalyzes deconjugation of PE-conjugated forms of ATG8 during macroautophagy: ATG8 delipidation is required to release the protein from membranes, which facilitates multiple events during macroautophagy, and especially for efficient autophagosome biogenesis, the assembly of ATG9-containing tubulovesicular clusters into phagophores/autophagosomes, and for the disassembly of PAS-associated ATG components. ATG8 delipidation by ATG4 also recycles ATG8-PE generated on inappropriate membranes to maintain a reservoir of unlipidated ATG8 that is required for autophagosome formation at the PAS. This Eremothecium gossypii (strain ATCC 10895 / CBS 109.51 / FGSC 9923 / NRRL Y-1056) (Yeast) protein is Probable cysteine protease ATG4 (ATG4).